A 1113-amino-acid polypeptide reads, in one-letter code: Myosin-binding protein 1 (1113 aa).

A helical membrane pass occupies residues 12-34 (LAFNEWLLMFMLFVNSIFSYVIA). The interval 209–229 (ESEAVFSDTEPKQESSLNHLP) is disordered. The region spanning 888-986 (SEGDRLKRQV…DLEAEIEYFR (99 aa)) is the GTD-binding domain.

As to quaternary structure, interacts with myosin XI-K, XI-I and XI-1. As to expression, expressed in leaf epidermal cells, roots and root hairs.

The protein resides in the endomembrane system. In terms of biological role, membrane-anchored myosin receptors that define a distinct, plant-specific transport vesicle compartment. The polypeptide is Myosin-binding protein 1 (Arabidopsis thaliana (Mouse-ear cress)).